The chain runs to 212 residues: Uracil phosphoribosyltransferase (212 aa).

Residues R78, R103, and 130 to 138 (DPMLATGGS) each bind 5-phospho-alpha-D-ribose 1-diphosphate. Uracil contacts are provided by residues I193 and 198–200 (GDA). 5-phospho-alpha-D-ribose 1-diphosphate is bound at residue D199.

It belongs to the UPRTase family. Mg(2+) is required as a cofactor.

The enzyme catalyses UMP + diphosphate = 5-phospho-alpha-D-ribose 1-diphosphate + uracil. Its pathway is pyrimidine metabolism; UMP biosynthesis via salvage pathway; UMP from uracil: step 1/1. Its activity is regulated as follows. Allosterically activated by GTP. Catalyzes the conversion of uracil and 5-phospho-alpha-D-ribose 1-diphosphate (PRPP) to UMP and diphosphate. In Pseudomonas entomophila (strain L48), this protein is Uracil phosphoribosyltransferase.